The following is a 334-amino-acid chain: MTPTVLLLILCFGVASGAQAHDPKLDAEWKDWKTKYAKSYSPKEEALRRAVWEENMRMIKLHNKENSLGKNNFTMKMNKFGDQTSEEFRKSIDNIPIPAAMTDPHAQNHVSIGLPDYKDWREEGYVTPVRNQGKCGSCWAFAAAGAIEGQMFWKTGNLTPLSVQNLLDCSKTVGNKGCQSGTAHQAFEYVLKNKGLEAEATYPYEGKDGPCRYRSENASANITDYVNLPPNELYLWVAVASIGPVSAAIDASHDSFRFYNGGIYYEPNCSSYFVNHAVLVVGYGSEGDVKDGNNYWLIKNSWGEEWGMNGYMQIAKDHNNHCGIASLASYPNIF.

Residues 1–17 (MTPTVLLLILCFGVASG) form the signal peptide. A propeptide spans 18 to 113 (AQAHDPKLDA…PHAQNHVSIG (96 aa)) (activation peptide). N-linked (GlcNAc...) asparagine glycosylation occurs at N72. 2 disulfide bridges follow: C135/C178 and C169/C211. C138 is a catalytic residue. N217, N221, and N268 each carry an N-linked (GlcNAc...) asparagine glycan. The cysteines at positions 269 and 322 are disulfide-linked. Catalysis depends on residues H276 and N300.

It belongs to the peptidase C1 family. Expressed specifically in placenta.

It is found in the lysosome. The protein is Cathepsin J (Ctsj) of Mus musculus (Mouse).